Consider the following 119-residue polypeptide: MARFVVAALLVLLSLSGLEAIQHAPKIQVYSRHPAENGKPNFLNCYVSGFHPSDIEVDLLKNGKKIEKVEHSDLSFSKDWSFYLLYYTEFTPNDKDEYACRVSHMTFPAPKTVKWDRNM.

The first 20 residues, 1–20, serve as a signal peptide directing secretion; that stretch reads MARFVVAALLVLLSLSGLEA. Residues 25 to 114 form the Ig-like C1-type domain; the sequence is PKIQVYSRHP…MTFPAPKTVK (90 aa). A disulfide bond links Cys-45 and Cys-100.

It belongs to the beta-2-microglobulin family. In terms of assembly, heterodimer of an alpha chain and a beta chain. Beta-2-microglobulin is the beta-chain of major histocompatibility complex class I molecules.

The protein resides in the secreted. In terms of biological role, component of the class I major histocompatibility complex (MHC). Involved in the presentation of peptide antigens to the immune system. The polypeptide is Beta-2-microglobulin (B2M) (Pithecia irrorata (Gray monk saki)).